A 226-amino-acid chain; its full sequence is ATP synthase F(0) complex subunit a (226 aa).

The next 6 membrane-spanning stretches (helical) occupy residues 10–30 (ITPT…PPVI), 68–88 (WSLM…LGLL), 97–117 (QLSM…ILGF), 138–158 (IPML…ALAV), 164–184 (ITAG…LTSI), and 189–209 (AMIT…VALI).

The protein belongs to the ATPase A chain family. As to quaternary structure, component of the ATP synthase complex composed at least of ATP5F1A/subunit alpha, ATP5F1B/subunit beta, ATP5MC1/subunit c (homooctomer), MT-ATP6/subunit a, MT-ATP8/subunit 8, ATP5ME/subunit e, ATP5MF/subunit f, ATP5MG/subunit g, ATP5MK/subunit k, ATP5MJ/subunit j, ATP5F1C/subunit gamma, ATP5F1D/subunit delta, ATP5F1E/subunit epsilon, ATP5PF/subunit F6, ATP5PB/subunit b, ATP5PD/subunit d, ATP5PO/subunit OSCP. ATP synthase complex consists of a soluble F(1) head domain (subunits alpha(3) and beta(3)) - the catalytic core - and a membrane F(0) domain - the membrane proton channel (subunits c, a, 8, e, f, g, k and j). These two domains are linked by a central stalk (subunits gamma, delta, and epsilon) rotating inside the F1 region and a stationary peripheral stalk (subunits F6, b, d, and OSCP). Interacts with DNAJC30; interaction is direct.

The protein localises to the mitochondrion inner membrane. It carries out the reaction H(+)(in) = H(+)(out). Subunit a, of the mitochondrial membrane ATP synthase complex (F(1)F(0) ATP synthase or Complex V) that produces ATP from ADP in the presence of a proton gradient across the membrane which is generated by electron transport complexes of the respiratory chain. ATP synthase complex consist of a soluble F(1) head domain - the catalytic core - and a membrane F(1) domain - the membrane proton channel. These two domains are linked by a central stalk rotating inside the F(1) region and a stationary peripheral stalk. During catalysis, ATP synthesis in the catalytic domain of F(1) is coupled via a rotary mechanism of the central stalk subunits to proton translocation. With the subunit c (ATP5MC1), forms the proton-conducting channel in the F(0) domain, that contains two crucial half-channels (inlet and outlet) that facilitate proton movement from the mitochondrial intermembrane space (IMS) into the matrix. Protons are taken up via the inlet half-channel and released through the outlet half-channel, following a Grotthuss mechanism. This chain is ATP synthase F(0) complex subunit a, found in Cricetulus griseus (Chinese hamster).